The chain runs to 513 residues: Glycogen synthase (513 aa).

Lys-47 provides a ligand contact to ADP-alpha-D-glucose.

It belongs to the glycosyltransferase 1 family. Bacterial/plant glycogen synthase subfamily.

The catalysed reaction is [(1-&gt;4)-alpha-D-glucosyl](n) + ADP-alpha-D-glucose = [(1-&gt;4)-alpha-D-glucosyl](n+1) + ADP + H(+). It functions in the pathway glycan biosynthesis; glycogen biosynthesis. Its function is as follows. Synthesizes alpha-1,4-glucan chains using ADP-glucose. The protein is Glycogen synthase of Pseudomonas aeruginosa (strain ATCC 15692 / DSM 22644 / CIP 104116 / JCM 14847 / LMG 12228 / 1C / PRS 101 / PAO1).